Here is a 198-residue protein sequence, read N- to C-terminus: V-type ATP synthase subunit E 1 (198 aa).

This sequence belongs to the V-ATPase E subunit family.

Produces ATP from ADP in the presence of a proton gradient across the membrane. The polypeptide is V-type ATP synthase subunit E 1 (Clostridium tetani (strain Massachusetts / E88)).